Consider the following 170-residue polypeptide: Ribosome maturation factor RimM (170 aa).

The region spanning 98–170 is the PRC barrel domain; sequence PDEYYWVDLE…LIVVDWDPDF (73 aa).

This sequence belongs to the RimM family. As to quaternary structure, binds ribosomal protein uS19.

The protein localises to the cytoplasm. An accessory protein needed during the final step in the assembly of 30S ribosomal subunit, possibly for assembly of the head region. Essential for efficient processing of 16S rRNA. May be needed both before and after RbfA during the maturation of 16S rRNA. It has affinity for free ribosomal 30S subunits but not for 70S ribosomes. In Xanthomonas oryzae pv. oryzae (strain MAFF 311018), this protein is Ribosome maturation factor RimM.